The following is a 138-amino-acid chain: Probable prefoldin subunit 4 (138 aa).

It belongs to the prefoldin subunit beta family. As to quaternary structure, heterohexamer of two PFD-alpha type and four PFD-beta type subunits.

Its function is as follows. Binds specifically to cytosolic chaperonin (c-CPN) and transfers target proteins to it. Binds to nascent polypeptide chain and promotes folding in an environment in which there are many competing pathways for nonnative proteins. The protein is Probable prefoldin subunit 4 of Drosophila melanogaster (Fruit fly).